We begin with the raw amino-acid sequence, 401 residues long: MTLPKIKHVRAWFIGGATAEKGAGGGDYHDQGGNHWIDDHIATPMSKYRDYEQSRQSFGINVLGTLIVEVEAENGQTGFAVSTAGEMGCFIVEKHLNRFIEGKCVSDIKLIHDQMLGATMYYSGSGGLVMNTISCVDLALWDLFGKVVGLPVYKLLGGAVRDEIQFYATGARPDLAKEMGFIGGKMPTHWGPHDGDAGIRKDAAMVADMREKCGPDFWLMLDCWMSQDVNYATKLAHACAPFNLKWIEECLPPQQYEGYRELKRNAPAGMMVTSGEHHGTLQSFRTLAETGIDIMQPDVGWCGGLTTLVEIAALAKSRGQLVVPHGSSVYSHHAVITFTNTPFSEFLMTSPDCSTLRPQFDPILLDEPVPVNGRIHKSVLDKPGFGVELNRDCHLKRPYSH.

His-29 and Arg-55 together coordinate substrate. Mg(2+)-binding residues include Asp-222, Glu-248, and Glu-276. The active-site Proton acceptor is the His-325. Glu-345 serves as a coordination point for substrate.

The protein belongs to the mandelate racemase/muconate lactonizing enzyme family. RhamD subfamily. As to quaternary structure, homooctamer; tetramer of dimers. Mg(2+) serves as cofactor.

The catalysed reaction is L-rhamnonate = 2-dehydro-3-deoxy-L-rhamnonate + H2O. Catalyzes the dehydration of L-rhamnonate to 2-keto-3-deoxy-L-rhamnonate (KDR). This is L-rhamnonate dehydratase from Salmonella schwarzengrund (strain CVM19633).